The chain runs to 493 residues: Lysine--tRNA ligase (493 aa).

Mg(2+) is bound by residues glutamate 400 and glutamate 407.

This sequence belongs to the class-II aminoacyl-tRNA synthetase family. As to quaternary structure, homodimer. The cofactor is Mg(2+).

It localises to the cytoplasm. The catalysed reaction is tRNA(Lys) + L-lysine + ATP = L-lysyl-tRNA(Lys) + AMP + diphosphate. This Syntrophomonas wolfei subsp. wolfei (strain DSM 2245B / Goettingen) protein is Lysine--tRNA ligase.